A 252-amino-acid polypeptide reads, in one-letter code: 5'-nucleotidase SurE (252 aa).

Positions 8, 9, 39, and 96 each coordinate a divalent metal cation.

This sequence belongs to the SurE nucleotidase family. The cofactor is a divalent metal cation.

Its subcellular location is the cytoplasm. It catalyses the reaction a ribonucleoside 5'-phosphate + H2O = a ribonucleoside + phosphate. Functionally, nucleotidase that shows phosphatase activity on nucleoside 5'-monophosphates. This is 5'-nucleotidase SurE from Petrotoga mobilis (strain DSM 10674 / SJ95).